A 53-amino-acid chain; its full sequence is Tryptophan RNA-binding attenuator protein inhibitory protein (53 aa).

CXXCXGXG motif repeat units lie at residues cysteine 12–glycine 19 and cysteine 26–glycine 33.

In terms of assembly, homopentamer or homohexamer.

It is found in the cytoplasm. By forming a complex with tryptophan-activated TRAP, and masking its RNA binding site, it inhibits TRAP's RNA binding ability, thereby abolishing TRAP regulation of gene expression, leading to antitermination and increased trp operon expression. AT acts by competing with messenger RNA for the RNA binding domain of TRAP. In Bacillus subtilis (strain 168), this protein is Tryptophan RNA-binding attenuator protein inhibitory protein (rtpA).